The primary structure comprises 135 residues: MTMTDPIADMLTRLRNANQAYHDRVTMPYSKIKANIAEVLKAEGYISTWLVEEPEESVVGKRLVVELKYGQNRERSLAGIKRVSKPGLRVYAKSGELPRVLGGLGVAIISTSQGLLTDRQARKRSVGGEVLAFVW.

It belongs to the universal ribosomal protein uS8 family. As to quaternary structure, part of the 30S ribosomal subunit. Contacts proteins S5 and S12.

Its function is as follows. One of the primary rRNA binding proteins, it binds directly to 16S rRNA central domain where it helps coordinate assembly of the platform of the 30S subunit. The chain is Small ribosomal subunit protein uS8 from Salinispora arenicola (strain CNS-205).